Reading from the N-terminus, the 294-residue chain is tRNA pseudouridine synthase B (294 aa).

Residue Asp-39 is the Nucleophile of the active site.

The protein belongs to the pseudouridine synthase TruB family. Type 1 subfamily.

It carries out the reaction uridine(55) in tRNA = pseudouridine(55) in tRNA. In terms of biological role, responsible for synthesis of pseudouridine from uracil-55 in the psi GC loop of transfer RNAs. The sequence is that of tRNA pseudouridine synthase B from Streptococcus pyogenes serotype M2 (strain MGAS10270).